The primary structure comprises 515 residues: 2,3-bisphosphoglycerate-independent phosphoglycerate mutase (515 aa).

Residues Asp-14 and Ser-63 each coordinate Mn(2+). The active site involves Ser-63. Residues His-124, 154-155 (RD), Arg-186, Arg-192, 259-262 (RADR), and Lys-334 contribute to the substrate site. Mn(2+) is bound by residues Asp-401, His-405, Asp-442, His-443, and His-460.

The protein belongs to the BPG-independent phosphoglycerate mutase family. The cofactor is Mg(2+). Mn(2+) is required as a cofactor.

The enzyme catalyses (2R)-2-phosphoglycerate = (2R)-3-phosphoglycerate. The protein operates within carbohydrate degradation; glycolysis; pyruvate from D-glyceraldehyde 3-phosphate: step 3/5. Its activity is regulated as follows. Activity is not affected by 2,3-bisphosphoglycerate. In terms of biological role, catalyzes the interconversion of 2-phosphoglycerate and 3-phosphoglycerate. This Onchocerca volvulus protein is 2,3-bisphosphoglycerate-independent phosphoglycerate mutase.